The sequence spans 475 residues: Transcription factor EB (475 aa).

A disordered region spans residues 1-52 (MASRIGLRMQLMREQAQQEEQRERMQQQAVMHYMQQQQQQQQQLGGPPTPAI). Residues 1-166 (MASRIGLRMQ…DDVIDNIMRL (166 aa)) form an interaction with ACSS2 region. The span at 26-43 (QQQAVMHYMQQQQQQQQQ) shows a compositional bias: low complexity. A phosphoserine mark is found at serine 108, serine 113, serine 121, and serine 137. The short motif at 135–152 (GNSAPNSPMAMLHISSNP) is the Nuclear export signal element. At serine 141 the chain carries Phosphoserine; by MTOR. Residues 155-164 (EFDDVIDNIM) are strong transcription activation domain. Threonine 182 is subject to Phosphothreonine. Serine 210 is modified (phosphoserine; by MTOR). Cysteine 211 is modified (S-(2,3-dicarboxypropyl)cysteine). The bHLH domain occupies 234 to 287 (QKKDNHNLIERRRRFNINDRIKELGMLIPKANDLDVRWNKGTILKASVDYIRRM). The Nuclear localization signal signature appears at 244–247 (RRRR). The interval 297 to 318 (LENHSRRLEMTNKQLWLRIQEL) is leucine-zipper. Serine 331 carries the phosphoserine modification. The interval 351 to 429 (SEDGPGEALM…HGSPFPNLSK (79 aa)) is disordered. A compositionally biased stretch (low complexity) spans 380 to 389 (LPSAAQPQSP). Phosphoserine occurs at positions 422, 440, 465, 466, and 468. A compositionally biased stretch (low complexity) spans 445-468 (ASDPLFSTMSPEASKASSRRSSFS). The tract at residues 445–475 (ASDPLFSTMSPEASKASSRRSSFSMEEGDVL) is disordered.

It belongs to the MiT/TFE family. Homodimer and heterodimer; with TFE3 or MITF. Interacts (when phosphorylated by MTOR) with YWHAZ; promoting retention in the cytosol. Interacts with Irgm1; promoting association between TFEB and PPP3CB and dephosphorylation. Interacts with small GTPases Rag (RagA/RRAGA, RagB/RRAGB, RagC/RRAGC and/or RagD/RRAGD); promoting its recruitment to lysosomal membrane in the presence of nutrients. Interacts with ACSS2. Post-translationally, phosphorylation at Ser-210 by MTOR via non-canonical mTORC1 pathway regulates its subcellular location and activity. When nutrients are present, phosphorylation by MTOR promotes association with 14-3-3/YWHA adapters and retention in the cytosol. Inhibition of mTORC1, starvation and lysosomal disruption, promotes dephosphorylation by calcineurin PPP3CB and translocation to the nucleus. Dephosphorylated by calcineurin PPP3CB in response to lysosomal Ca(2+) release. Irgm1 promotes dephosphorylation by calcineurin PPP3CB, resulting in TFEB nuclear translocation and stimulation of lysosomal biogenesis. Exported from the nucleus in a mTORC1-dependent manner in response to nutrient availability. In terms of processing, alkylated via a non-enzymatic covalent modification. Itaconate, an anti-inflammatory metabolite generated in response to lipopolysaccharide, alkylates Cys-211, preventing association with 14-3-3/YWHA adapters, thereby promoting nuclear translocation and activity. Sumoylated; does not affect dimerization with MITF. In terms of tissue distribution, widely expressed.

It is found in the nucleus. The protein localises to the cytoplasm. It localises to the cytosol. Its subcellular location is the lysosome membrane. Functionally, transcription factor that acts as a master regulator of lysosomal biogenesis, autophagy, lysosomal exocytosis, lipid catabolism, energy metabolism and immune response. Specifically recognizes and binds E-box sequences (5'-CANNTG-3'); efficient DNA-binding requires dimerization with itself or with another MiT/TFE family member such as TFE3 or MITF. Involved in the cellular response to amino acid availability by acting downstream of MTOR: in the presence of nutrients, TFEB phosphorylation by MTOR promotes its cytosolic retention and subsequent inactivation. Upon starvation or lysosomal stress, inhibition of MTOR induces TFEB dephosphorylation, resulting in nuclear localization and transcription factor activity. Specifically recognizes and binds the CLEAR-box sequence (5'-GTCACGTGAC-3') present in the regulatory region of many lysosomal genes, leading to activate their expression, thereby playing a central role in expression of lysosomal genes. Regulates lysosomal positioning in response to nutrient deprivation by promoting the expression of PIP4P1. Acts as a positive regulator of autophagy by promoting expression of genes involved in autophagy. In association with TFE3, activates the expression of CD40L in T-cells, thereby playing a role in T-cell-dependent antibody responses in activated CD4(+) T-cells and thymus-dependent humoral immunity. Specifically recognizes the gamma-E3 box, a subset of E-boxes, present in the heavy-chain immunoglobulin enhancer. Plays a role in the signal transduction processes required for normal vascularization of the placenta. Involved in the immune response to infection by the bacteria S.aureus, S.typhimurium or S.enterica. Infection promotes itaconate production, leading to alkylation, resulting in nuclear localization and transcription factor activity. Itaconate-mediated alkylation activates TFEB-dependent lysosomal biogenesis, facilitating the bacteria clearance during the antibacterial innate immune response. In association with ACSS2, promotes the expression of genes involved in lysosome biogenesis and both autophagy upon glucose deprivation. The sequence is that of Transcription factor EB from Mus musculus (Mouse).